Here is a 341-residue protein sequence, read N- to C-terminus: UDP-N-acetylenolpyruvoylglucosamine reductase (341 aa).

One can recognise an FAD-binding PCMH-type domain in the interval 13–185 (FGVEQSCLSM…TAVGLRLPKA (173 aa)). Arg-161 is an active-site residue. Ser-231 (proton donor) is an active-site residue. Residue Glu-327 is part of the active site.

Belongs to the MurB family. FAD is required as a cofactor.

The protein localises to the cytoplasm. It catalyses the reaction UDP-N-acetyl-alpha-D-muramate + NADP(+) = UDP-N-acetyl-3-O-(1-carboxyvinyl)-alpha-D-glucosamine + NADPH + H(+). It functions in the pathway cell wall biogenesis; peptidoglycan biosynthesis. Functionally, cell wall formation. The chain is UDP-N-acetylenolpyruvoylglucosamine reductase from Shewanella sp. (strain MR-7).